The primary structure comprises 447 residues: Phosphoglucosamine mutase (447 aa).

Residue serine 102 is the Phosphoserine intermediate of the active site. The Mg(2+) site is built by serine 102, aspartate 241, aspartate 243, and aspartate 245. Serine 102 bears the Phosphoserine mark.

It belongs to the phosphohexose mutase family. It depends on Mg(2+) as a cofactor. In terms of processing, activated by phosphorylation.

It carries out the reaction alpha-D-glucosamine 1-phosphate = D-glucosamine 6-phosphate. In terms of biological role, catalyzes the conversion of glucosamine-6-phosphate to glucosamine-1-phosphate. This chain is Phosphoglucosamine mutase, found in Symbiobacterium thermophilum (strain DSM 24528 / JCM 14929 / IAM 14863 / T).